Reading from the N-terminus, the 366-residue chain is Melatonin receptor type 1A (366 aa).

At 1 to 45 (MAGRLWGSPGGTPKGNGSSALLNVSQAAPGAGDGVRPRPSWLAAT) the chain is on the extracellular side. N-linked (GlcNAc...) asparagine glycosylation is found at Asn-16 and Asn-23. Residues 46-66 (LASILIFTIVVDIVGNLLVVL) form a helical membrane-spanning segment. The Cytoplasmic portion of the chain corresponds to 67-79 (SVYRNKKLRNAGN). Residues 80-100 (VFVVSLAVADLLVAVYPYPLA) traverse the membrane as a helical segment. Over 101–118 (LASIVNNGWSLSSLHCQL) the chain is Extracellular. The cysteines at positions 116 and 193 are disulfide-linked. A helical transmembrane segment spans residues 119-139 (SGFLMGLSVIGSVFSITGIAI). At 140-158 (NRYCCICHSLRYGKLYSGT) the chain is on the cytoplasmic side. Residues 159-179 (NSLCYVFLIWTLTLVAIVPNL) form a helical membrane-spanning segment. Topologically, residues 180–203 (CVGTLQYDPRIYSCTFTQSVSSAY) are extracellular. The helical transmembrane segment at 204–224 (TIAVVVFHFIVPMLVVVFCYL) threads the bilayer. The Cytoplasmic portion of the chain corresponds to 225–256 (RIWALVLQVRWKVKPDNKPKLKPQDFRNFVTM). The helical transmembrane segment at 257–277 (FVVFVLFAICWAPLNFIGLVV) threads the bilayer. Topologically, residues 278–290 (ASDPASMAPRIPE) are extracellular. Residues 291-311 (WLFVASYYMAYFNSCLNAIIY) form a helical membrane-spanning segment. At 312–366 (GLLNQNFRQEYRKIIVSLCTTKMFFVDSSNHVADRIKRKPSPLIANHNLIKVDSV) the chain is on the cytoplasmic side.

This sequence belongs to the G-protein coupled receptor 1 family.

It localises to the cell membrane. Functionally, high affinity receptor for melatonin. Likely to mediate the reproductive and circadian actions of melatonin. The activity of this receptor is mediated by pertussis toxin sensitive G proteins that inhibit adenylate cyclase activity. Possibly involved in sleep induction, by melatonin activation of the potassium channel KCNMA1/BK and the dissociation of G-beta and G-gamma subunits, thereby decreasing synaptic transmission. The protein is Melatonin receptor type 1A (MTNR1A) of Ovis aries (Sheep).